The chain runs to 423 residues: Lipoamide acyltransferase component of branched-chain alpha-keto acid dehydrogenase complex (423 aa).

One can recognise a Lipoyl-binding domain in the interval Thr-3–Glu-78. The residue at position 44 (Lys-44) is an N6-lipoyllysine. The Peripheral subunit-binding (PSBD) domain maps to Leu-137–Met-174. Residues His-395 and Asp-399 contribute to the active site.

It belongs to the 2-oxoacid dehydrogenase family. Forms a 24-polypeptide structural core with octahedral symmetry. (R)-lipoate is required as a cofactor.

The catalysed reaction is N(6)-[(R)-dihydrolipoyl]-L-lysyl-[protein] + 2-methylpropanoyl-CoA = N(6)-[(R)-S(8)-2-methylpropanoyldihydrolipoyl]-L-lysyl-[protein] + CoA. Functionally, the branched-chain alpha-keto dehydrogenase complex catalyzes the overall conversion of alpha-keto acids to acyl-CoA and CO(2). It contains multiple copies of three enzymatic components: branched-chain alpha-keto acid decarboxylase (E1), lipoamide acyltransferase (E2) and lipoamide dehydrogenase (E3). This chain is Lipoamide acyltransferase component of branched-chain alpha-keto acid dehydrogenase complex (bkdB), found in Pseudomonas putida (Arthrobacter siderocapsulatus).